Reading from the N-terminus, the 208-residue chain is Protein-L-isoaspartate O-methyltransferase (208 aa).

Residue S59 is part of the active site.

The protein belongs to the methyltransferase superfamily. L-isoaspartyl/D-aspartyl protein methyltransferase family.

The protein localises to the cytoplasm. It catalyses the reaction [protein]-L-isoaspartate + S-adenosyl-L-methionine = [protein]-L-isoaspartate alpha-methyl ester + S-adenosyl-L-homocysteine. Functionally, catalyzes the methyl esterification of L-isoaspartyl residues in peptides and proteins that result from spontaneous decomposition of normal L-aspartyl and L-asparaginyl residues. It plays a role in the repair and/or degradation of damaged proteins. The sequence is that of Protein-L-isoaspartate O-methyltransferase from Pectobacterium carotovorum subsp. carotovorum (strain PC1).